The following is a 182-amino-acid chain: Large ribosomal subunit protein uL6 (182 aa).

Belongs to the universal ribosomal protein uL6 family. Part of the 50S ribosomal subunit.

This protein binds to the 23S rRNA, and is important in its secondary structure. It is located near the subunit interface in the base of the L7/L12 stalk, and near the tRNA binding site of the peptidyltransferase center. This chain is Large ribosomal subunit protein uL6, found in Nostoc punctiforme (strain ATCC 29133 / PCC 73102).